The chain runs to 545 residues: MVTIVLNKYKLLDKIHIGQQKLEDLLFNLKSEVKPIDENNIEIEINADRLDLLSSDGIARSIKGLLEKELGEAKYNVTDTEYTLIVDNVRTRPYALAAVVYNAKIDLEELIQFQEKLHGTIGRKRKKVAIGIHDLRKVDSKTIEYKEVPLSYKFVPLYENKELTISEILEKTEQGKLYGNISIANGVSPAIVQDDGEVLSIPPIINSNKTRLDETTKDFFIDVTGTSFEAVAQTLDIIVSNLAEAGGTIGRVKVLKSANSSQLSSPLFLHKIQNVREEYVKKILGIKTSKEEICKHVMRMRMNCDIENGVIRVTVPQYRVDILNEIDVVEDIAMSIGYNNLEPSKYISTNYGSYDYMTLLERKIRELGIGAGYVEISNFVLIKDEKLFSNKYVKILNPVTDEYNAVRNSLIPGLLDFLSKNQHAKFPIRVFETGDVVVYDSSTDTGFRNDKRAAYAIMDNKVSYEDIQAPIHYILKSLGLEVNYKEENNNIFIEGRSASIFYENEKMGVIGEVNPDVLIRFGIEYPAVIAELYISEIAKRLTNQR.

The B5 domain maps to 268–343 (FLHKIQNVRE…MSIGYNNLEP (76 aa)). Residues aspartate 321, aspartate 327, glutamate 330, and aspartate 331 each coordinate Mg(2+).

Belongs to the phenylalanyl-tRNA synthetase beta subunit family. Type 2 subfamily. As to quaternary structure, tetramer of two alpha and two beta subunits. Mg(2+) is required as a cofactor.

It is found in the cytoplasm. It catalyses the reaction tRNA(Phe) + L-phenylalanine + ATP = L-phenylalanyl-tRNA(Phe) + AMP + diphosphate + H(+). This chain is Phenylalanine--tRNA ligase beta subunit, found in Saccharolobus islandicus (strain M.16.27) (Sulfolobus islandicus).